The chain runs to 89 residues: Small ribosomal subunit protein uS14 (89 aa).

Belongs to the universal ribosomal protein uS14 family. As to quaternary structure, part of the 30S ribosomal subunit. Contacts proteins S3 and S10.

In terms of biological role, binds 16S rRNA, required for the assembly of 30S particles and may also be responsible for determining the conformation of the 16S rRNA at the A site. This chain is Small ribosomal subunit protein uS14, found in Amoebophilus asiaticus (strain 5a2).